The chain runs to 352 residues: Biotin synthase (352 aa).

One can recognise a Radical SAM core domain in the interval 44 to 262 (NRVQVSTLLS…LAVARILMPK (219 aa)). C59, C63, and C66 together coordinate [4Fe-4S] cluster. The [2Fe-2S] cluster site is built by C103, C134, C194, and R266.

This sequence belongs to the radical SAM superfamily. Biotin synthase family. In terms of assembly, homodimer. [4Fe-4S] cluster serves as cofactor. It depends on [2Fe-2S] cluster as a cofactor.

It catalyses the reaction (4R,5S)-dethiobiotin + (sulfur carrier)-SH + 2 reduced [2Fe-2S]-[ferredoxin] + 2 S-adenosyl-L-methionine = (sulfur carrier)-H + biotin + 2 5'-deoxyadenosine + 2 L-methionine + 2 oxidized [2Fe-2S]-[ferredoxin]. It participates in cofactor biosynthesis; biotin biosynthesis; biotin from 7,8-diaminononanoate: step 2/2. In terms of biological role, catalyzes the conversion of dethiobiotin (DTB) to biotin by the insertion of a sulfur atom into dethiobiotin via a radical-based mechanism. The sequence is that of Biotin synthase from Pseudomonas putida (strain ATCC 47054 / DSM 6125 / CFBP 8728 / NCIMB 11950 / KT2440).